The primary structure comprises 341 residues: Phenylalanine--tRNA ligase alpha subunit (341 aa).

A Mg(2+)-binding site is contributed by glutamate 255.

The protein belongs to the class-II aminoacyl-tRNA synthetase family. Phe-tRNA synthetase alpha subunit type 1 subfamily. As to quaternary structure, tetramer of two alpha and two beta subunits. It depends on Mg(2+) as a cofactor.

It is found in the cytoplasm. It catalyses the reaction tRNA(Phe) + L-phenylalanine + ATP = L-phenylalanyl-tRNA(Phe) + AMP + diphosphate + H(+). This is Phenylalanine--tRNA ligase alpha subunit from Natranaerobius thermophilus (strain ATCC BAA-1301 / DSM 18059 / JW/NM-WN-LF).